Reading from the N-terminus, the 178-residue chain is uncharacterized protein (178 aa).

An MSP domain is found at 52 to 177; the sequence is HIAIEDRAHQ…RRLPASFLST (126 aa).

This is an uncharacterized protein from Caenorhabditis elegans.